The sequence spans 734 residues: Photosystem I P700 chlorophyll a apoprotein A2 (734 aa).

The next 8 helical transmembrane spans lie at 46–69 (IFAS…FHVA), 135–158 (LYTG…LHLQ), 175–199 (LNHH…HVAI), 273–291 (MAHH…GHMY), 330–353 (LHFQ…QHMY), 369–395 (AASY…IFFI), 417–439 (AIIS…LYVH), and 517–535 (FLVH…LILV). Residues Cys559 and Cys568 each coordinate [4Fe-4S] cluster. The next 2 membrane-spanning stretches (helical) occupy residues 575 to 596 (AFYL…YWHW) and 643 to 665 (LSVW…MFLI). His654, Met662, and Tyr670 together coordinate chlorophyll a. Trp671 provides a ligand contact to phylloquinone. Residues 707 to 727 (LVGLAHFSVGYIFTYAAFLIA) traverse the membrane as a helical segment.

The protein belongs to the PsaA/PsaB family. In terms of assembly, the PsaA/B heterodimer binds the P700 chlorophyll special pair and subsequent electron acceptors. PSI consists of a core antenna complex that captures photons, and an electron transfer chain that converts photonic excitation into a charge separation. The eukaryotic PSI reaction center is composed of at least 11 subunits. P700 is a chlorophyll a/chlorophyll a' dimer, A0 is one or more chlorophyll a, A1 is one or both phylloquinones and FX is a shared 4Fe-4S iron-sulfur center. serves as cofactor.

Its subcellular location is the plastid. The protein localises to the chloroplast thylakoid membrane. The enzyme catalyses reduced [plastocyanin] + hnu + oxidized [2Fe-2S]-[ferredoxin] = oxidized [plastocyanin] + reduced [2Fe-2S]-[ferredoxin]. In terms of biological role, psaA and PsaB bind P700, the primary electron donor of photosystem I (PSI), as well as the electron acceptors A0, A1 and FX. PSI is a plastocyanin-ferredoxin oxidoreductase, converting photonic excitation into a charge separation, which transfers an electron from the donor P700 chlorophyll pair to the spectroscopically characterized acceptors A0, A1, FX, FA and FB in turn. Oxidized P700 is reduced on the lumenal side of the thylakoid membrane by plastocyanin. The chain is Photosystem I P700 chlorophyll a apoprotein A2 from Acorus calamus (Sweet flag).